A 496-amino-acid polypeptide reads, in one-letter code: Protein nucleotidyltransferase YdiU (496 aa).

Glycine 98, glycine 100, arginine 101, lysine 116, aspartate 128, glycine 129, arginine 179, and arginine 186 together coordinate ATP. Aspartate 259 acts as the Proton acceptor in catalysis. Residues asparagine 260 and aspartate 269 each coordinate Mg(2+). Aspartate 269 is an ATP binding site.

It belongs to the SELO family. Requires Mg(2+) as cofactor. The cofactor is Mn(2+).

It catalyses the reaction L-seryl-[protein] + ATP = 3-O-(5'-adenylyl)-L-seryl-[protein] + diphosphate. It carries out the reaction L-threonyl-[protein] + ATP = 3-O-(5'-adenylyl)-L-threonyl-[protein] + diphosphate. The catalysed reaction is L-tyrosyl-[protein] + ATP = O-(5'-adenylyl)-L-tyrosyl-[protein] + diphosphate. The enzyme catalyses L-histidyl-[protein] + UTP = N(tele)-(5'-uridylyl)-L-histidyl-[protein] + diphosphate. It catalyses the reaction L-seryl-[protein] + UTP = O-(5'-uridylyl)-L-seryl-[protein] + diphosphate. It carries out the reaction L-tyrosyl-[protein] + UTP = O-(5'-uridylyl)-L-tyrosyl-[protein] + diphosphate. Functionally, nucleotidyltransferase involved in the post-translational modification of proteins. It can catalyze the addition of adenosine monophosphate (AMP) or uridine monophosphate (UMP) to a protein, resulting in modifications known as AMPylation and UMPylation. The sequence is that of Protein nucleotidyltransferase YdiU from Albidiferax ferrireducens (strain ATCC BAA-621 / DSM 15236 / T118) (Rhodoferax ferrireducens).